Here is a 193-residue protein sequence, read N- to C-terminus: Anthranilate synthase component 2 (193 aa).

A Glutamine amidotransferase type-1 domain is found at 3-193 (DILLLDNVDS…EQTLAWALAK (191 aa)). Residue 57–59 (GPG) coordinates L-glutamine. Cys84 serves as the catalytic Nucleophile; for GATase activity. L-glutamine-binding positions include Gln88 and 134–135 (SL). Residues His170 and Glu172 each act as for GATase activity in the active site.

In terms of assembly, heterotetramer consisting of two non-identical subunits: a beta subunit (TrpG) and a large alpha subunit (TrpE).

The enzyme catalyses chorismate + L-glutamine = anthranilate + pyruvate + L-glutamate + H(+). Its pathway is amino-acid biosynthesis; L-tryptophan biosynthesis; L-tryptophan from chorismate: step 1/5. Functionally, part of a heterotetrameric complex that catalyzes the two-step biosynthesis of anthranilate, an intermediate in the biosynthesis of L-tryptophan. In the first step, the glutamine-binding beta subunit (TrpG) of anthranilate synthase (AS) provides the glutamine amidotransferase activity which generates ammonia as a substrate that, along with chorismate, is used in the second step, catalyzed by the large alpha subunit of AS (TrpE) to produce anthranilate. In the absence of TrpG, TrpE can synthesize anthranilate directly from chorismate and high concentrations of ammonia. This is Anthranilate synthase component 2 (trpG) from Serratia marcescens.